The following is a 448-amino-acid chain: Asparagine--tRNA ligase (448 aa).

This sequence belongs to the class-II aminoacyl-tRNA synthetase family. Homodimer.

The protein localises to the cytoplasm. It carries out the reaction tRNA(Asn) + L-asparagine + ATP = L-asparaginyl-tRNA(Asn) + AMP + diphosphate + H(+). The polypeptide is Asparagine--tRNA ligase (Streptococcus pyogenes serotype M12 (strain MGAS9429)).